The primary structure comprises 412 residues: Protein trichome birefringence-like 13 (412 aa).

The helical; Signal-anchor for type II membrane protein transmembrane segment at 9–29 threads the bilayer; that stretch reads PSLFPLLSLLCFISIFLLLSL. Positions 137–139 match the GDS motif motif; the sequence is GDS. Positions 385-399 match the DCXHWCLPGXXDXWN motif motif; sequence DCMHWCLPGLTDTWN.

The protein belongs to the PC-esterase family. TBL subfamily.

The protein resides in the membrane. May act as a bridging protein that binds pectin and other cell wall polysaccharides. Probably involved in maintaining esterification of pectins. May be involved in the specific O-acetylation of cell wall polymers. In Arabidopsis thaliana (Mouse-ear cress), this protein is Protein trichome birefringence-like 13 (TBL13).